The sequence spans 264 residues: Phosphonoacetaldehyde hydrolase (264 aa).

Asp-9 functions as the Nucleophile in the catalytic mechanism. The Mg(2+) site is built by Asp-9 and Ala-11. Lys-50 functions as the Schiff-base intermediate with substrate in the catalytic mechanism. A Mg(2+)-binding site is contributed by Asp-183.

Belongs to the HAD-like hydrolase superfamily. PhnX family. As to quaternary structure, homodimer. Requires Mg(2+) as cofactor.

The enzyme catalyses phosphonoacetaldehyde + H2O = acetaldehyde + phosphate + H(+). Its function is as follows. Involved in phosphonate degradation. This chain is Phosphonoacetaldehyde hydrolase (phnX), found in Bacillus cereus.